The sequence spans 294 residues: MTFEGHACAFGAGTIINAIATWKGAAFGVDLKTFAEVSLFEGKSGIKGSIEGTPEGDTRLIEHCVELVLERFGLELEGTIITGSEIPLAGGLKSSSAAANASVLATLRAVGEILPPLEIVKLGVRAAKEVGVTVTGAFDDACASFLGGIVVTDNRKMELVRREEADSKVLIFAPSKKAFSADTNVKRSRLIAPYVEMAYELALKGEYERAMTLNGFLYCGALGFDTEYMLKALECGVTGVSLSGTGPSYAALVKAEQVKELKSAWESCGMEGKVIETSINNRDAISFKGRGSLE.

87 to 97 (PLAGGLKSSSA) contributes to the ATP binding site.

This sequence belongs to the GHMP kinase family. Archaeal shikimate kinase subfamily.

The protein localises to the cytoplasm. The enzyme catalyses shikimate + ATP = 3-phosphoshikimate + ADP + H(+). Its pathway is metabolic intermediate biosynthesis; chorismate biosynthesis; chorismate from D-erythrose 4-phosphate and phosphoenolpyruvate: step 5/7. This Methanosarcina acetivorans (strain ATCC 35395 / DSM 2834 / JCM 12185 / C2A) protein is Shikimate kinase (aroK).